The sequence spans 106 residues: Starvation responsive small protein A (106 aa).

Residues 15–32 (ILLVNAGLISAYGVRIIF) form a helical membrane-spanning segment.

It localises to the cell membrane. Involved in starvation response and aggregation stage of the life cycle. May be involved in fruiting body morphogenesis and spore formation. This is Starvation responsive small protein A from Dictyostelium discoideum (Social amoeba).